We begin with the raw amino-acid sequence, 401 residues long: Tumor necrosis factor receptor superfamily member 11B (401 aa).

Positions 1–21 (MNNLLCCALVFLDISIKWTTQ) are cleaved as a signal peptide. 4 TNFR-Cys repeats span residues 24 to 62 (FPPKYLHYDEETSHQLLCDKCPPGTYLKQHCTAKWKTVC), 65 to 105 (CPDH…NRVC), 107 to 142 (CKEGRYLEIEFCLKHRSCPPGFGVVQAGTPERNTVC), and 145 to 185 (CPDG…DNIC). Intrachain disulfides connect Cys-41-Cys-54, Cys-44-Cys-62, Cys-65-Cys-80, Cys-83-Cys-97, Cys-87-Cys-105, Cys-107-Cys-118, Cys-124-Cys-142, and Cys-145-Cys-160. Asn-98 is a glycosylation site (N-linked (GlcNAc...) asparagine). 3 N-linked (GlcNAc...) asparagine glycosylation sites follow: Asn-152, Asn-165, and Asn-178. Cys-166 and Cys-185 are disulfide-bonded. Death domains lie at 198–269 (DVTL…IVKK) and 270–365 (IIQD…TQSL). Asn-289 is a glycosylation site (N-linked (GlcNAc...) asparagine).

Homodimer. Interacts with TNFSF10 and TNFSF11. Post-translationally, N-glycosylated. Contains sialic acid residues. The N-terminus is blocked. In terms of tissue distribution, highly expressed in adult lung, heart, kidney, liver, spleen, thymus, prostate, ovary, small intestine, thyroid, lymph node, trachea, adrenal gland, testis, and bone marrow. Detected at very low levels in brain, placenta and skeletal muscle. Highly expressed in fetal kidney, liver and lung.

The protein localises to the secreted. In terms of biological role, acts as a decoy receptor for TNFSF11/RANKL and thereby neutralizes its function in osteoclastogenesis. Inhibits the activation of osteoclasts and promotes osteoclast apoptosis in vitro. Bone homeostasis seems to depend on the local ratio between TNFSF11 and TNFRSF11B. May also play a role in preventing arterial calcification. May act as decoy receptor for TNFSF10/TRAIL and protect against apoptosis. TNFSF10/TRAIL binding blocks the inhibition of osteoclastogenesis. This Homo sapiens (Human) protein is Tumor necrosis factor receptor superfamily member 11B (TNFRSF11B).